The sequence spans 434 residues: MKPVKVGICGLGTVGGGTFNVLERNAEEIARRAGRGIEVAQIAARRPNPKCDTGATPITADIFDVACNPEIDVVVELIGGYTLAHELVLKAIENGKHVVTANKALIAVHGNEIFAKAREKGVIVAFEAAVAGGIPVIKAIREGLSANRINWLAGIINGTGNFILSEMREKGRTFPDVLAEAQALGYAEADPTFDVEGIDAAHKLTILASIAFGIPLQFDKAYTEGISKLTSADVNYADALGYRIKHLGVARRTESGFELRVHPTLIPSDRLIANVNGVMNAVMVNGDAVGSTLYYGAGAGMEPTASSVVADLVDVVRAMTSDPENRVPHLAFQPDALSDHPILPIEACESAYYLRIQAKDHPGVLAQVATILSERGINIESIMQKEAEEQDGLVPMILVTHRVIEQRINDAIAALEALEGVSGPVVRIRVEQLN.

NADPH-binding residues include Thr-13 and Val-14. Residues Val-14, Ala-33, and Ala-43 each contribute to the NAD(+) site. Val-14 provides a ligand contact to NADP(+). Position 45 (Arg-45) interacts with NADPH. Residues Arg-45, Arg-46, and Lys-103 each contribute to the NADP(+) site. Lys-103 serves as a coordination point for NADPH. Na(+) contacts are provided by Glu-127, Val-130, Gly-132, and Ile-134. The NADP(+) site is built by Gly-185 and Glu-188. Positions 188 and 199 each coordinate L-homoserine. Catalysis depends on Lys-203, which acts as the Proton donor. Position 300 (Gly-300) interacts with NADPH. Position 300 (Gly-300) interacts with NAD(+). Gly-300 contributes to the NADP(+) binding site. The 77-residue stretch at 353-429 folds into the ACT domain; sequence YLRIQAKDHP…GVSGPVVRIR (77 aa).

It belongs to the homoserine dehydrogenase family. Requires a metal cation as cofactor.

It catalyses the reaction L-homoserine + NADP(+) = L-aspartate 4-semialdehyde + NADPH + H(+). It carries out the reaction L-homoserine + NAD(+) = L-aspartate 4-semialdehyde + NADH + H(+). Its pathway is amino-acid biosynthesis; L-methionine biosynthesis via de novo pathway; L-homoserine from L-aspartate: step 3/3. It participates in amino-acid biosynthesis; L-threonine biosynthesis; L-threonine from L-aspartate: step 3/5. Its activity is regulated as follows. Feedback inhibition by threonine. Functionally, catalyzes the conversion of L-aspartate-beta-semialdehyde (L-Asa) to L-homoserine (L-Hse), the third step in the biosynthesis of threonine and methionine from aspartate. This Pseudomonas aeruginosa (strain ATCC 15692 / DSM 22644 / CIP 104116 / JCM 14847 / LMG 12228 / 1C / PRS 101 / PAO1) protein is Homoserine dehydrogenase (hom).